A 334-amino-acid chain; its full sequence is Succinate receptor 1 (334 aa).

The Extracellular portion of the chain corresponds to 5–31; that stretch reads MAWNATCKNWLAAEAALEKYYLSIFYG. The N-linked (GlcNAc...) asparagine glycan is linked to Asn8. Residues 32 to 52 form a helical membrane-spanning segment; sequence IEFVVGVLGNTIVVYGYIFSL. The Cytoplasmic segment spans residues 53 to 59; it reads KNWNSSN. The helical transmembrane segment at 60 to 80 threads the bilayer; sequence IYLFNLSVSDLAFLCTLPMLI. At 81–103 the chain is on the extracellular side; it reads RSYANGNWIYGDVLCISNRYVLH. Cys95 and Cys172 are oxidised to a cystine. A helical membrane pass occupies residues 104–124; sequence ANLYTSILFLTFISIDRYLII. At 125 to 137 the chain is on the cytoplasmic side; it reads KYPFREHLLQKKE. Residues 138-158 form a helical membrane-spanning segment; the sequence is FAILISLAIWVLVTLELLPIL. Residues 159-185 are Extracellular-facing; the sequence is PLINPVITDNGTTCNDFASSGDPNYNL. Asn168 carries an N-linked (GlcNAc...) asparagine glycan. A helical transmembrane segment spans residues 186 to 206; it reads IYSMCLTLLGFLIPLFVMCFF. Residues 207–230 are Cytoplasmic-facing; the sequence is YYKIALFLKQRNRQVATALPLEKP. A helical membrane pass occupies residues 231-251; it reads LNLVIMAVVIFSVLFTPYHVM. Residues 252–281 are Extracellular-facing; sequence RNVRIASRLGSWKQYQCTQVVINSFYIVTR. A helical membrane pass occupies residues 282-302; that stretch reads PLAFLNSVINPVFYFLLGDHF. Topologically, residues 303-334 are cytoplasmic; it reads RDMLMNQLRHNFKSLTSFSRWAHELLLSFREK.

It belongs to the G-protein coupled receptor 1 family. Expressed specifically in kidney. Highly expressed in immature dendritic cells, expression rapidly downregulates after maturation. Also expressed in macrophages.

Its subcellular location is the cell membrane. In terms of biological role, g protein-coupled receptor for succinate able to mediate signaling through Gq/GNAQ or Gi/GNAI second messengers depending on the cell type and the processes regulated. Succinate-SUCNR1 signaling serves as a link between metabolic stress, inflammation and energy homeostasis. In macrophages, plays a range of immune-regulatory roles. During inflammation, succinate-SUCNR1 signaling may act as an anti-inflammatory mediator or boost inflammation depending on the inflammatory status of cells. Hyperpolarizes M2 macrophages versus M1 phenotype through Gq signaling by regulating the transcription of genes involved in immune function. In activated M1 macrophages, plays a pro-inflammatory role in response to LPS. Expressed in dendritic cells, where it is involved in the sensing of immunological danger and enhances immunity. Mediates succinate triggered intracelleular calcium mobilization, induces migratory responses and acts in synergy with Toll-like receptor ligands for the production of proinflammatory cytokines as well as an enhancement of antigen-specific activation of helper T cells. In the small intestine, mediates the activation of tuft cells by dietary succinate and triggers type 2 immunity. In adipocytes, plays an important role in the control of energy metabolism. In response to succinate, controls leptin expression in an AMPK-JNK-CEBPA-dependent as well as circadian clock-regulated manner. In muscle tissue, is expressed in non-muscle cells and coordinates muscle remodeling in response to the succinate produced during exercise training in a paracrine manner. In retina, acts as a mediator of vessel growth during retinal development. In response to succinate, regulates the production of angiogenic factors, including VEGF, by retinal ganglion neurons. The protein is Succinate receptor 1 of Homo sapiens (Human).